Here is a 266-residue protein sequence, read N- to C-terminus: tRNA dimethylallyltransferase (266 aa).

This sequence belongs to the IPP transferase family. Monomer. Mg(2+) serves as cofactor.

It catalyses the reaction adenosine(37) in tRNA + dimethylallyl diphosphate = N(6)-dimethylallyladenosine(37) in tRNA + diphosphate. In terms of biological role, catalyzes the transfer of a dimethylallyl group onto the adenine at position 37 in tRNAs that read codons beginning with uridine, leading to the formation of N6-(dimethylallyl)adenosine (i(6)A). This Helicobacter acinonychis (strain Sheeba) protein is tRNA dimethylallyltransferase (miaA).